A 257-amino-acid polypeptide reads, in one-letter code: Phosphonates import ATP-binding protein PhnC (257 aa).

The ABC transporter domain maps to 2 to 246 (IEFRNVSKVY…KFAEIYGDVV (245 aa)). An ATP-binding site is contributed by 35 to 42 (GLSGAGKS).

The protein belongs to the ABC transporter superfamily. Phosphonates importer (TC 3.A.1.9.1) family. As to quaternary structure, the complex is composed of two ATP-binding proteins (PhnC), two transmembrane proteins (PhnE) and a solute-binding protein (PhnD).

Its subcellular location is the cell membrane. It carries out the reaction phosphonate(out) + ATP + H2O = phosphonate(in) + ADP + phosphate + H(+). In terms of biological role, part of the ABC transporter complex PhnCDE involved in phosphonates import. Responsible for energy coupling to the transport system. This Bacillus anthracis protein is Phosphonates import ATP-binding protein PhnC.